The chain runs to 185 residues: A-type ATP synthase subunit E (185 aa).

It belongs to the V-ATPase E subunit family. In terms of assembly, has multiple subunits with at least A(3), B(3), C, D, E, F, H, I and proteolipid K(x).

It localises to the cell membrane. Its function is as follows. Component of the A-type ATP synthase that produces ATP from ADP in the presence of a proton gradient across the membrane. The polypeptide is A-type ATP synthase subunit E (Thermoplasma acidophilum (strain ATCC 25905 / DSM 1728 / JCM 9062 / NBRC 15155 / AMRC-C165)).